The chain runs to 90 residues: MIDPETRHKAFLKAWPWQNSTITFVPGLAICHYSSVQVPRRGAILPMLYALCYVKMPSFQHGPGRMYHLTCDWPRKMSLSCHVCRAHFRD.

The protein is Putative transcript Y 12 protein (TTTY12) of Homo sapiens (Human).